A 62-amino-acid chain; its full sequence is Protein DsrB (62 aa).

Belongs to the DsrB family.

The chain is Protein DsrB from Enterobacter sp. (strain 638).